The primary structure comprises 701 residues: Phytyl ester synthase 2, chloroplastic (701 aa).

The N-terminal 65 residues, 1 to 65 (MAVTVLPSVS…KNNDENRATV (65 aa)), are a transit peptide targeting the chloroplast. Residues 37–64 (SVTSTSSPPTPSSGVQRRRKNNDENRAT) form a disordered region.

The protein belongs to the diacylglycerol acyltransferase family.

The protein resides in the plastid. The protein localises to the chloroplast. It is found in the plastoglobule. The enzyme catalyses a 1,2-diacyl-3-O-(beta-D-galactosyl)-sn-glycerol + a 1,2-diacylglycerol = an acyl-3-O-(beta-D-galactosyl)-sn-glycerol + a triacylglycerol. It carries out the reaction a 1,2-diacylglycerol + a fatty acyl-CoA = a triacylglycerol + CoA. The catalysed reaction is a fatty acyl-[ACP] + a 1,2-diacylglycerol = a triacylglycerol + holo-[ACP]. It catalyses the reaction phytol + a fatty acyl-CoA = a fatty acid phytyl ester + CoA. The enzyme catalyses phytol + tetradecanoyl-CoA = tetradecanoate phytyl ester + CoA. It carries out the reaction a 1,3-diacylglycerol + a fatty acyl-CoA = a triacylglycerol + CoA. The catalysed reaction is 1,2-dihexanoylglycerol + tetradecanoyl-CoA = 1,2-dihexanoyl-3-tetradecanoylglycerol + CoA. It catalyses the reaction 1,2-dihexanoylglycerol + hexadecanoyl-CoA = 1,2-dihexanoyl-3-hexadecanoylglycerol + CoA. The enzyme catalyses 1,2-dihexanoylglycerol + octadecanoyl-CoA = 1,2-dihexanoyl-3-octadecanoylglycerol + CoA. It carries out the reaction (7Z,10Z,13Z)-hexadecatrienoyl-CoA + 1,2-dihexanoylglycerol = 1,2-dihexanoyl-3-(7Z,10Z,13Z-hexadecatrienoyl)-glycerol + CoA. The catalysed reaction is 1,2-dihexanoylglycerol + (9Z)-octadecenoyl-CoA = 1,2-dihexanoyl-3-(9Z-octadecenoyl)-glycerol + CoA. It catalyses the reaction 1,2-dihexanoylglycerol + (9Z,12Z,15Z)-octadecatrienoyl-CoA = 1,2-dihexanoyl-3-(9Z,12Z,15Z-octadecatrienoyl)-glycerol + CoA. The enzyme catalyses phytol + decanoyl-CoA = decanoate phytyl ester + CoA. It carries out the reaction (7Z,10Z,13Z)-hexadecatrienoyl-CoA + phytol = (7Z,10Z,13Z)-hexadecatrienoate phytyl ester + CoA. The catalysed reaction is phytol + dodecanoyl-CoA = dodecanoate phytyl ester + CoA. Its function is as follows. Acyltransferase involved in fatty acid phytyl ester synthesis in chloroplasts, a process required for the maintenance of the photosynthetic membrane integrity during abiotic stress and senescence. Exhibits phytyl ester synthesis and diacylglycerol acyltransferase activities with broad substrate specificities, and can employ acyl-CoAs, acyl carrier proteins, and galactolipids as acyl donors. This is Phytyl ester synthase 2, chloroplastic from Arabidopsis thaliana (Mouse-ear cress).